We begin with the raw amino-acid sequence, 65 residues long: Protein MalX (65 aa).

This Klebsiella pneumoniae protein is Protein MalX (malX).